A 108-amino-acid chain; its full sequence is uncharacterized protein (108 aa).

A disordered region spans residues 1–23 (MVDELEKNQVQPQETEENKENAL).

This is an uncharacterized protein from Ureaplasma parvum serovar 3 (strain ATCC 700970).